The sequence spans 464 residues: Histidine--tRNA ligase (464 aa).

The protein belongs to the class-II aminoacyl-tRNA synthetase family. In terms of assembly, homodimer.

It localises to the cytoplasm. The catalysed reaction is tRNA(His) + L-histidine + ATP = L-histidyl-tRNA(His) + AMP + diphosphate + H(+). This Stenotrophomonas maltophilia (strain K279a) protein is Histidine--tRNA ligase.